A 335-amino-acid chain; its full sequence is Dye-decolorizing peroxidase (335 aa).

Residue D149 is the Proton acceptor of the active site. H222 is a heme binding site. Residues 312–335 (LPQAATPTLAAGSLSIGSLKGSPR) are targeting peptide.

This sequence belongs to the DyP-type peroxidase family. Homotetramer, presumably also in the encapsulin nanocompartment. Heme b is required as a cofactor.

It is found in the encapsulin nanocompartment. The catalysed reaction is 2 a phenolic donor + H2O2 = 2 a phenolic radical donor + 2 H2O. Cargo of a type 1 encapsulin nanocompartment in situ; this cargo protects against oxidative stress at low pH. When expressed in the cytoplasm (absence of the encapsulin shell gene) it is almost as protective as the intact nanocompartment; its encapsulation has a modest yet significant effect on protection against oxidative stress at low pH. A heme-dependent peroxidase, it probably does not have deferrochelatase activity. Converts guaiacol and H2O2 to tetraguaiacol, also acts on 2,2'-azino-bis(3-ethylbenzothiazoline-6-sulfonic acid) (ABTS). Retains peroxidase activity when encapsulated but has a reduced set of substrates; acts on ABTS but not guaiacol. The chain is Dye-decolorizing peroxidase from Mycobacterium tuberculosis (strain ATCC 25618 / H37Rv).